We begin with the raw amino-acid sequence, 488 residues long: Glutamyl-tRNA(Gln) amidotransferase subunit A (488 aa).

Active-site charge relay system residues include K77 and S152. The active-site Acyl-ester intermediate is the S176.

Belongs to the amidase family. GatA subfamily. In terms of assembly, heterotrimer of A, B and C subunits.

The catalysed reaction is L-glutamyl-tRNA(Gln) + L-glutamine + ATP + H2O = L-glutaminyl-tRNA(Gln) + L-glutamate + ADP + phosphate + H(+). Allows the formation of correctly charged Gln-tRNA(Gln) through the transamidation of misacylated Glu-tRNA(Gln) in organisms which lack glutaminyl-tRNA synthetase. The reaction takes place in the presence of glutamine and ATP through an activated gamma-phospho-Glu-tRNA(Gln). This chain is Glutamyl-tRNA(Gln) amidotransferase subunit A, found in Streptococcus sanguinis (strain SK36).